Here is a 135-residue protein sequence, read N- to C-terminus: Photosystem II extrinsic protein U (135 aa).

An N-terminal signal peptide occupies residues 1–26 (MKNLVRLLAVIALIIGSFWGKVPAQA).

The protein belongs to the PsbU family. PSII is composed of 1 copy each of membrane proteins PsbA, PsbB, PsbC, PsbD, PsbE, PsbF, PsbH, PsbI, PsbJ, PsbK, PsbL, PsbM, PsbT, PsbX, PsbY, PsbZ, Psb30/Ycf12, peripheral proteins PsbO, CyanoQ (PsbQ), PsbU, PsbV and a large number of cofactors. It forms dimeric complexes.

It is found in the cellular thylakoid membrane. In terms of biological role, one of the extrinsic, lumenal subunits of photosystem II (PSII). PSII is a light-driven water plastoquinone oxidoreductase, using light energy to abstract electrons from H(2)O, generating a proton gradient subsequently used for ATP formation. The extrinsic proteins stabilize the structure of photosystem II oxygen-evolving complex (OEC), the ion environment of oxygen evolution and protect the OEC against heat-induced inactivation. This Microcystis aeruginosa (strain NIES-843 / IAM M-2473) protein is Photosystem II extrinsic protein U.